The chain runs to 356 residues: S-adenosylmethionine:tRNA ribosyltransferase-isomerase (356 aa).

Belongs to the QueA family. In terms of assembly, monomer.

It localises to the cytoplasm. It catalyses the reaction 7-aminomethyl-7-carbaguanosine(34) in tRNA + S-adenosyl-L-methionine = epoxyqueuosine(34) in tRNA + adenine + L-methionine + 2 H(+). Its pathway is tRNA modification; tRNA-queuosine biosynthesis. In terms of biological role, transfers and isomerizes the ribose moiety from AdoMet to the 7-aminomethyl group of 7-deazaguanine (preQ1-tRNA) to give epoxyqueuosine (oQ-tRNA). This Salmonella arizonae (strain ATCC BAA-731 / CDC346-86 / RSK2980) protein is S-adenosylmethionine:tRNA ribosyltransferase-isomerase.